The chain runs to 131 residues: Lactose permease (131 aa).

The Cytoplasmic portion of the chain corresponds to M1–N13. A helical membrane pass occupies residues F14 to F34. The Periplasmic segment spans residues F35–T50. A helical transmembrane segment spans residues G51 to M71. The Cytoplasmic segment spans residues S72–H80. A helical transmembrane segment spans residues L81–S101. Residue P102 is a topological domain, periplasmic. The helical transmembrane segment at L103 to F123 threads the bilayer. Residues S124 to S131 lie on the Cytoplasmic side of the membrane.

The protein belongs to the major facilitator superfamily. Oligosaccharide:H(+) symporter (OHS) (TC 2.A.1.5) family.

The protein resides in the cell inner membrane. The catalysed reaction is lactose(in) + H(+)(in) = lactose(out) + H(+)(out). In terms of biological role, responsible for transport of beta-galactosides into the cell, with the concomitant import of a proton (symport system). The polypeptide is Lactose permease (lacY) (Klebsiella pneumoniae).